The chain runs to 185 residues: Ribosome-recycling factor (185 aa).

It belongs to the RRF family.

It is found in the cytoplasm. Responsible for the release of ribosomes from messenger RNA at the termination of protein biosynthesis. May increase the efficiency of translation by recycling ribosomes from one round of translation to another. The sequence is that of Ribosome-recycling factor from Shewanella piezotolerans (strain WP3 / JCM 13877).